Here is an 86-residue protein sequence, read N- to C-terminus: Small ribosomal subunit protein bS20 (86 aa).

Over residues 1-11 the composition is skewed to basic residues; the sequence is MANIKSAKKRA. The segment at 1–26 is disordered; it reads MANIKSAKKRAITSEKNRQHNASRRS.

The protein belongs to the bacterial ribosomal protein bS20 family.

Binds directly to 16S ribosomal RNA. This chain is Small ribosomal subunit protein bS20, found in Pseudoalteromonas translucida (strain TAC 125).